We begin with the raw amino-acid sequence, 91 residues long: MFGLGGAAPQISSQQKLQAAEAELDMVTGMFNQLVEQCHSKCINKTYNDSEVSKQEALCLDRCVAKYFETNVQVGEHMQKMGQSGQFMGRQ.

The Twin CX3C motif motif lies at 38-63 (CHSKCINKTYNDSEVSKQEALCLDRC). 2 cysteine pairs are disulfide-bonded: Cys-38–Cys-63 and Cys-42–Cys-59.

The protein belongs to the small Tim family. Heterohexamer; composed of 3 copies of TIM9 and 3 copies of TIM10, named soluble 70 kDa complex. Associates directly with the TIM22 complex, whose core is composed of TIM22 and TIM54. Interacts with the transmembrane regions of multi-pass transmembrane proteins in transit.

The protein resides in the mitochondrion inner membrane. In terms of biological role, mitochondrial intermembrane chaperone that participates in the import and insertion of multi-pass transmembrane proteins into the mitochondrial inner membrane. Also required for the transfer of beta-barrel precursors from the TOM complex to the sorting and assembly machinery (SAM complex) of the outer membrane. Acts as a chaperone-like protein that protects the hydrophobic precursors from aggregation and guide them through the mitochondrial intermembrane space. This Debaryomyces hansenii (strain ATCC 36239 / CBS 767 / BCRC 21394 / JCM 1990 / NBRC 0083 / IGC 2968) (Yeast) protein is Mitochondrial import inner membrane translocase subunit TIM10 (TIM10).